The primary structure comprises 146 residues: Hemoglobin subunit beta (146 aa).

In terms of domain architecture, Globin spans 2–146 (PFSAHEEKLI…VAAALSVEYY (145 aa)). The heme b site is built by His63 and His92.

This sequence belongs to the globin family. In terms of assembly, heterotetramer of two alpha chains and two beta chains. When oxygenated in vitro, exists virtually only in polymeric form. When deoxygenated, forms tetramers, octamers and larger polymers. In terms of tissue distribution, red blood cells.

Its function is as follows. Involved in oxygen transport from the lung to the various peripheral tissues. The sequence is that of Hemoglobin subunit beta from Paleosuchus palpebrosus (Cuvier's smooth-fronted caiman).